The chain runs to 129 residues: Tumor necrosis factor receptor superfamily member 12A (129 aa).

The signal sequence occupies residues 1–27 (MARGSLRRLLRLLVLGLWLALLRSVAG). Residues 28 to 80 (EQAPGTAPCSRGSSWSADLDKCMDCASCRARPHSDFCLGCAAAPPAPFRLLWP) lie on the Extracellular side of the membrane. 3 cysteine pairs are disulfide-bonded: cysteine 36/cysteine 49, cysteine 52/cysteine 67, and cysteine 55/cysteine 64. A TNFR-Cys; atypical repeat occupies 36–67 (CSRGSSWSADLDKCMDCASCRARPHSDFCLGC). Residues 81 to 101 (ILGGALSLTFVLGLLSGFLVW) traverse the membrane as a helical segment. Residues 102–129 (RRCRRREKFTTPIEETGGEGCPAVALIQ) are Cytoplasmic-facing.

In terms of assembly, associates with TRAF1 and TRAF2, and probably also with TRAF3. In terms of tissue distribution, highly expressed in heart, placenta and kidney. Intermediate expression in lung, skeletal muscle and pancreas.

It localises to the membrane. In terms of biological role, receptor for TNFSF12/TWEAK. Weak inducer of apoptosis in some cell types. Promotes angiogenesis and the proliferation of endothelial cells. May modulate cellular adhesion to matrix proteins. The polypeptide is Tumor necrosis factor receptor superfamily member 12A (TNFRSF12A) (Homo sapiens (Human)).